Consider the following 725-residue polypeptide: Phosphoribosylformylglycinamidine synthase subunit PurL (725 aa).

The active site involves histidine 42. Positions 45 and 84 each coordinate ATP. Glutamate 86 is a binding site for Mg(2+). Residues 87 to 90 (SHNH) and arginine 109 each bind substrate. The active-site Proton acceptor is the histidine 88. Aspartate 110 contacts Mg(2+). Substrate is bound at residue glutamine 237. Residue aspartate 265 coordinates Mg(2+). 309–311 (ESQ) lines the substrate pocket. Residues aspartate 491 and glycine 528 each coordinate ATP. A Mg(2+)-binding site is contributed by asparagine 529. Serine 531 is a binding site for substrate.

Belongs to the FGAMS family. Monomer. Part of the FGAM synthase complex composed of 1 PurL, 1 PurQ and 2 PurS subunits.

It is found in the cytoplasm. The catalysed reaction is N(2)-formyl-N(1)-(5-phospho-beta-D-ribosyl)glycinamide + L-glutamine + ATP + H2O = 2-formamido-N(1)-(5-O-phospho-beta-D-ribosyl)acetamidine + L-glutamate + ADP + phosphate + H(+). It functions in the pathway purine metabolism; IMP biosynthesis via de novo pathway; 5-amino-1-(5-phospho-D-ribosyl)imidazole from N(2)-formyl-N(1)-(5-phospho-D-ribosyl)glycinamide: step 1/2. Part of the phosphoribosylformylglycinamidine synthase complex involved in the purines biosynthetic pathway. Catalyzes the ATP-dependent conversion of formylglycinamide ribonucleotide (FGAR) and glutamine to yield formylglycinamidine ribonucleotide (FGAM) and glutamate. The FGAM synthase complex is composed of three subunits. PurQ produces an ammonia molecule by converting glutamine to glutamate. PurL transfers the ammonia molecule to FGAR to form FGAM in an ATP-dependent manner. PurS interacts with PurQ and PurL and is thought to assist in the transfer of the ammonia molecule from PurQ to PurL. The sequence is that of Phosphoribosylformylglycinamidine synthase subunit PurL from Campylobacter lari (strain RM2100 / D67 / ATCC BAA-1060).